A 183-amino-acid polypeptide reads, in one-letter code: Mid1-interacting protein 1 (183 aa).

Met-1 is modified (N-acetylmethionine). Ser-75 and Ser-79 each carry phosphoserine.

This sequence belongs to the SPOT14 family. Homodimer in the absence of THRSP. Heterodimer with THRSP. The homodimer interacts with ACACA and ACACB. Promotes polymerization of Acetyl-CoA carboxylase to form complexes that contain MID1IP1 and ACACA and/or ACACB. Interaction with THRSP interferes with ACACA binding.

Its subcellular location is the nucleus. The protein localises to the cytoplasm. It is found in the cytoskeleton. Its function is as follows. Plays a role in the regulation of lipogenesis in liver. Up-regulates ACACA enzyme activity. Required for efficient lipid biosynthesis, including triacylglycerol, diacylglycerol and phospholipid. Involved in stabilization of microtubules. This Homo sapiens (Human) protein is Mid1-interacting protein 1 (MID1IP1).